A 38-amino-acid chain; its full sequence is Phi-Lf prophage-derived putative minor coat protein (38 aa).

This chain is Phi-Lf prophage-derived putative minor coat protein (gIX-1), found in Xanthomonas campestris pv. campestris (strain ATCC 33913 / DSM 3586 / NCPPB 528 / LMG 568 / P 25).